A 60-amino-acid polypeptide reads, in one-letter code: Large ribosomal subunit protein uL30 (60 aa).

It belongs to the universal ribosomal protein uL30 family. In terms of assembly, part of the 50S ribosomal subunit.

This chain is Large ribosomal subunit protein uL30, found in Bacillus anthracis (strain A0248).